The following is a 110-amino-acid chain: Large ribosomal subunit protein uL22 (110 aa).

The protein belongs to the universal ribosomal protein uL22 family. As to quaternary structure, part of the 50S ribosomal subunit.

In terms of biological role, this protein binds specifically to 23S rRNA; its binding is stimulated by other ribosomal proteins, e.g. L4, L17, and L20. It is important during the early stages of 50S assembly. It makes multiple contacts with different domains of the 23S rRNA in the assembled 50S subunit and ribosome. Functionally, the globular domain of the protein is located near the polypeptide exit tunnel on the outside of the subunit, while an extended beta-hairpin is found that lines the wall of the exit tunnel in the center of the 70S ribosome. The polypeptide is Large ribosomal subunit protein uL22 (Photobacterium profundum (strain SS9)).